The following is a 751-amino-acid chain: Disintegrin and metalloproteinase domain-containing protein 2 (751 aa).

Residues 1 to 16 form the signal peptide; the sequence is MLRVLFLLCGLSGLRT. The propeptide occupies 17–173; sequence KENSERLHVQ…PYKVQSVQPR (157 aa). At 17 to 702 the chain is on the extracellular side; sequence KENSERLHVQ…DVYQTAKPTR (686 aa). 4 N-linked (GlcNAc...) asparagine glycosylation sites follow: asparagine 122, asparagine 147, asparagine 219, and asparagine 289. The 198-residue stretch at 177–374 folds into the Peptidase M12B domain; that stretch reads QYIEMHVVVE…QKSQCLQNLP (198 aa). 3 disulfides stabilise this stretch: cysteine 286–cysteine 369, cysteine 328–cysteine 353, and cysteine 330–cysteine 335. Asparagine 352, asparagine 434, asparagine 458, asparagine 559, and asparagine 566 each carry an N-linked (GlcNAc...) asparagine glycan. Residues 383–472 enclose the Disintegrin domain; it reads DAVCGNSIVE…LCPDDIVIQN (90 aa). An intrachain disulfide couples cysteine 444 to cysteine 464. Residues 612 to 645 enclose the EGF-like domain; sequence VNLGCTLQNCNNQGICNSLQHCHCNPTFLPPNCS. 3 disulfide bridges follow: cysteine 616-cysteine 627, cysteine 621-cysteine 633, and cysteine 635-cysteine 644. The N-linked (GlcNAc...) asparagine glycan is linked to asparagine 643. Residues 703 to 723 traverse the membrane as a helical segment; sequence WPFFLLIPFFIILGALIAILV. Over 724–751 the chain is Cytoplasmic; the sequence is KVQFQRKKWKTEDYTSDEQFESDSELKE. Phosphoserine is present on serine 745.

In terms of assembly, heterodimer with ADAM1/fertilin subunit alpha. Post-translationally, the signal and the metalloprotease domain are cleaved during the epididymal maturation of the spermatozoa. In terms of tissue distribution, expressed specifically in testis.

It is found in the membrane. Functionally, sperm surface membrane protein that may be involved in sperm-egg plasma membrane adhesion and fusion during fertilization. Could have a direct role in sperm-zona binding or migration of sperm from the uterus into the oviduct. Interactions with egg membrane could be mediated via binding between its disintegrin-like domain to one or more integrins receptors on the egg. This is a non catalytic metalloprotease-like protein. The polypeptide is Disintegrin and metalloproteinase domain-containing protein 2 (ADAM2) (Oryctolagus cuniculus (Rabbit)).